The chain runs to 212 residues: Imidazole glycerol phosphate synthase subunit HisH (212 aa).

One can recognise a Glutamine amidotransferase type-1 domain in the interval 1–211; the sequence is MIGVIDYGMG…TKMAAEQQVK (211 aa). Cys-79 acts as the Nucleophile in catalysis. Catalysis depends on residues His-186 and Glu-188.

As to quaternary structure, heterodimer of HisH and HisF.

It localises to the cytoplasm. The enzyme catalyses 5-[(5-phospho-1-deoxy-D-ribulos-1-ylimino)methylamino]-1-(5-phospho-beta-D-ribosyl)imidazole-4-carboxamide + L-glutamine = D-erythro-1-(imidazol-4-yl)glycerol 3-phosphate + 5-amino-1-(5-phospho-beta-D-ribosyl)imidazole-4-carboxamide + L-glutamate + H(+). The catalysed reaction is L-glutamine + H2O = L-glutamate + NH4(+). Its pathway is amino-acid biosynthesis; L-histidine biosynthesis; L-histidine from 5-phospho-alpha-D-ribose 1-diphosphate: step 5/9. In terms of biological role, IGPS catalyzes the conversion of PRFAR and glutamine to IGP, AICAR and glutamate. The HisH subunit catalyzes the hydrolysis of glutamine to glutamate and ammonia as part of the synthesis of IGP and AICAR. The resulting ammonia molecule is channeled to the active site of HisF. The polypeptide is Imidazole glycerol phosphate synthase subunit HisH (Bacillus velezensis (strain DSM 23117 / BGSC 10A6 / LMG 26770 / FZB42) (Bacillus amyloliquefaciens subsp. plantarum)).